The sequence spans 280 residues: Hematopoietically-expressed homeobox protein HHEX homolog (280 aa).

Disordered stretches follow at residues 1–35 (MSTL…GLAP) and 221–280 (RRVK…EKEA). A DNA-binding region (homeobox) is located at residues 165–224 (RKGGQVRFSNDQTMELEKKFESQKYLSPPERKKLAKLLQLSERQVKTWFQNRRAKWRRVK). Residues 232–252 (GEGDENSHEKPRDLDRDDFSR) are compositionally biased toward basic and acidic residues.

The protein localises to the nucleus. Its function is as follows. Transcription factor that may play a central role in activating or maintaining gene expression in the vegetal pole. Part of a gene regulatory circuit with Erg and Tgif that operates early in mesoderm development. This chain is Hematopoietically-expressed homeobox protein HHEX homolog, found in Patiria miniata (Bat star).